Here is a 380-residue protein sequence, read N- to C-terminus: Chaperone protein DnaJ (380 aa).

The interval 1 to 48 (MAKKDYYDTLGVPKNASDDDIKKAYRKLAMKHHPDRNQGDKSKVSEEK) is disordered. The J domain maps to 5-72 (DYYDTLGVPK…NKRMAYDQYG (68 aa)). The span at 24–34 (AYRKLAMKHHP) shows a compositional bias: basic residues. The segment covering 35 to 48 (DRNQGDKSKVSEEK) has biased composition (basic and acidic residues). The CR-type zinc-finger motif lies at 139 to 217 (GKEAQIRIPS…CHGVGKTKNN (79 aa)). Cys-152, Cys-155, Cys-169, Cys-172, Cys-191, Cys-194, Cys-205, and Cys-208 together coordinate Zn(2+). CXXCXGXG motif repeat units follow at residues 152 to 159 (CNTCHGSG), 169 to 176 (CTTCHGHG), 191 to 198 (CPQCKGTG), and 205 to 212 (CVACHGVG). A disordered region spans residues 357–380 (KKGGARHSPSEEGWADKLKSFFSA). Positions 364-380 (SPSEEGWADKLKSFFSA) are enriched in basic and acidic residues.

Belongs to the DnaJ family. As to quaternary structure, homodimer. It depends on Zn(2+) as a cofactor.

The protein resides in the cytoplasm. Functionally, participates actively in the response to hyperosmotic and heat shock by preventing the aggregation of stress-denatured proteins and by disaggregating proteins, also in an autonomous, DnaK-independent fashion. Unfolded proteins bind initially to DnaJ; upon interaction with the DnaJ-bound protein, DnaK hydrolyzes its bound ATP, resulting in the formation of a stable complex. GrpE releases ADP from DnaK; ATP binding to DnaK triggers the release of the substrate protein, thus completing the reaction cycle. Several rounds of ATP-dependent interactions between DnaJ, DnaK and GrpE are required for fully efficient folding. Also involved, together with DnaK and GrpE, in the DNA replication of plasmids through activation of initiation proteins. This is Chaperone protein DnaJ from Polaromonas sp. (strain JS666 / ATCC BAA-500).